The sequence spans 944 residues: Respiratory burst oxidase homolog protein F (944 aa).

Topologically, residues 2-387 are cytoplasmic; the sequence is KPFSKNDRRR…VYIMQENWKR (386 aa). Coiled coils occupy residues 102–126 and 157–184; these read QFSQ…KRFS and LEAR…RGLR. 2 EF-hand-like regions span residues 207 to 215 and 241 to 252; these read EKNGYIYRS and RRLKVEKINHDE. EF-hand domains are found at residues 264–299 and 308–343; these read SFDS…SASA and QAEE…KDTY. 7 residues coordinate Ca(2+): D277, N279, D281, R283, E288, D321, and Y327. A phosphoserine mark is found at S354 and S358. Residues 388 to 408 traverse the membrane as a helical segment; that stretch reads IWVLSLWIMIMIGLFLWKFFQ. The Extracellular segment spans residues 409–475; that stretch reads YKQKDAFHVM…INFHKTIAGA (67 aa). Residues 426–583 form the Ferric oxidoreductase domain; it reads KGAAETLKFN…LFVIVYILLI (158 aa). A helical transmembrane segment spans residues 476–492; the sequence is IVVAVILHIGDHLACDF. The Cytoplasmic portion of the chain corresponds to 493 to 527; the sequence is PRIVRATEYDYNRYLFHYFQTKQPTYFDLVKGPEG. Residues 528-548 form a helical membrane-spanning segment; it reads ITGILMVILMIISFTLATRWF. Residues 549-570 are Extracellular-facing; sequence RRNLVKLPKPFDRLTGFNAFWY. A helical transmembrane segment spans residues 571–591; sequence SHHLFVIVYILLILHGIFLYF. The Cytoplasmic portion of the chain corresponds to 592-599; sequence AKPWYVRT. Residues 600–617 traverse the membrane as a helical segment; that stretch reads TWMYLAVPVLLYGGERTL. Residues 618–744 are Extracellular-facing; that stretch reads RYFRSGSYSV…PYGAPAQDYR (127 aa). The 121-residue stretch at 622-742 folds into the FAD-binding FR-type domain; sequence SGSYSVRLLK…DGPYGAPAQD (121 aa). The chain crosses the membrane as a helical span at residues 745 to 765; that stretch reads KYDVLLLVGLGIGATPFISIL. The Cytoplasmic portion of the chain corresponds to 766 to 944; the sequence is KDLLNNIVKM…TKFEFHKEHF (179 aa).

Belongs to the RBOH (TC 5.B.1.3) family. Monomer and homodimer. Interacts (via N-terminus) with CIPK26. Interacts (via N-terminus) with SRC2. In terms of processing, not glycosylated. Phosphorylated by CIPK26. As to expression, expressed in roots, stems, seedlings, inflorescences, leaves and guard cells.

The protein resides in the cell membrane. Inhibited by diphenylene iodonium (DPI). Its function is as follows. Calcium-dependent NADPH oxidase that generates superoxide. Generates reactive oxygen species (ROS) during incompatible interactions with pathogens and is important in the regulation of the hypersensitive response (HR). Involved in abscisic acid-induced stomatal closing and in UV-B and abscisic acid ROS-dependent signaling. The polypeptide is Respiratory burst oxidase homolog protein F (RBOHF) (Arabidopsis thaliana (Mouse-ear cress)).